We begin with the raw amino-acid sequence, 318 residues long: UPF0725 protein At3g44770 (318 aa).

It belongs to the UPF0725 (EMB2204) family.

The chain is UPF0725 protein At3g44770 from Arabidopsis thaliana (Mouse-ear cress).